The primary structure comprises 276 residues: CTD small phosphatase-like protein (276 aa).

Positions 1-31 are disordered; that stretch reads MDGPAIITQVTNPKEDEARSPVAGEKASQRN. Positions 102-260 constitute an FCP1 homology domain; it reads LDYGKKCVVI…LDLIPFFEGL (159 aa). The 4-aspartylphosphate intermediate role is filled by D112. Mg(2+) is bound by residues D112, D114, and N223. D114 (proton donor) is an active-site residue.

Monomer. Interacts with REST. The cofactor is Mg(2+).

The protein resides in the nucleus. The enzyme catalyses O-phospho-L-seryl-[protein] + H2O = L-seryl-[protein] + phosphate. It catalyses the reaction O-phospho-L-threonyl-[protein] + H2O = L-threonyl-[protein] + phosphate. Functionally, preferentially catalyzes the dephosphorylation of 'Ser-5' within the tandem 7 residue repeats in the C-terminal domain (CTD) of the largest RNA polymerase II subunit POLR2A. Negatively regulates RNA polymerase II transcription, possibly by controlling the transition from initiation/capping to processive transcript elongation. Recruited by REST to neuronal genes that contain RE-1 elements, leading to neuronal gene silencing in non-neuronal cells. This chain is CTD small phosphatase-like protein (Ctdspl), found in Mus musculus (Mouse).